We begin with the raw amino-acid sequence, 383 residues long: Glutamyl-tRNA reductase (383 aa).

Substrate-binding positions include 38-41, serine 82, 87-89, and glutamine 93; these read TCNR and EDQ. Cysteine 39 acts as the Nucleophile in catalysis. Position 161 to 166 (161 to 166) interacts with NADP(+); the sequence is GAGEIA.

It belongs to the glutamyl-tRNA reductase family. Homodimer.

It carries out the reaction (S)-4-amino-5-oxopentanoate + tRNA(Glu) + NADP(+) = L-glutamyl-tRNA(Glu) + NADPH + H(+). The protein operates within porphyrin-containing compound metabolism; protoporphyrin-IX biosynthesis; 5-aminolevulinate from L-glutamyl-tRNA(Glu): step 1/2. Its function is as follows. Catalyzes the NADPH-dependent reduction of glutamyl-tRNA(Glu) to glutamate 1-semialdehyde (GSA). The protein is Glutamyl-tRNA reductase of Methanococcus aeolicus (strain ATCC BAA-1280 / DSM 17508 / OCM 812 / Nankai-3).